The following is a 239-amino-acid chain: tRNA (guanine-N(7)-)-methyltransferase (239 aa).

S-adenosyl-L-methionine is bound by residues E69, E94, D121, and D144. D144 is a catalytic residue. Substrate is bound at residue K148. Residues 150-155 (RHNKRR) are interaction with RNA. Residues D180 and 217 to 220 (TKFE) each bind substrate.

Belongs to the class I-like SAM-binding methyltransferase superfamily. TrmB family. In terms of assembly, monomer.

It carries out the reaction guanosine(46) in tRNA + S-adenosyl-L-methionine = N(7)-methylguanosine(46) in tRNA + S-adenosyl-L-homocysteine. It functions in the pathway tRNA modification; N(7)-methylguanine-tRNA biosynthesis. In terms of biological role, catalyzes the formation of N(7)-methylguanine at position 46 (m7G46) in tRNA. This chain is tRNA (guanine-N(7)-)-methyltransferase, found in Salmonella choleraesuis (strain SC-B67).